The sequence spans 675 residues: L-type lectin-domain containing receptor kinase IX.2 (675 aa).

The first 35 residues, 1-35 (MLYFIFCQNLSSSSSMSNSILFLSLFLFLPFVVDS), serve as a signal peptide directing secretion. N-linked (GlcNAc...) asparagine glycosylation is found at asparagine 9, asparagine 39, asparagine 110, asparagine 146, asparagine 179, asparagine 186, asparagine 191, and asparagine 212. A legume-lectin like region spans residues 36–269 (LYFNFTSFRQ…EEHRLLSWEL (234 aa)). Residues 36 to 281 (LYFNFTSFRQ…SLDSDKADSR (246 aa)) are Extracellular-facing. The helical transmembrane segment at 282 to 302 (IGLVIGISASGFVFLTFMVIT) threads the bilayer. The Cytoplasmic segment spans residues 303-675 (TVVVWSRKQR…VTFSGIEYGR (373 aa)). The 282-residue stretch at 350–631 (FSSHRKLGEG…KQGIQVMNFE (282 aa)) folds into the Protein kinase domain. Residues 356 to 364 (LGEGGFGAV) and lysine 379 each bind ATP. Aspartate 475 functions as the Proton acceptor in the catalytic mechanism.

It in the C-terminal section; belongs to the protein kinase superfamily. Ser/Thr protein kinase family. In the N-terminal section; belongs to the leguminous lectin family. In terms of assembly, interacts with ABCG40.

The protein resides in the cell membrane. The enzyme catalyses L-seryl-[protein] + ATP = O-phospho-L-seryl-[protein] + ADP + H(+). It catalyses the reaction L-threonyl-[protein] + ATP = O-phospho-L-threonyl-[protein] + ADP + H(+). Functionally, promotes hydrogen peroxide H(2)O(2) production and cell death. Its function is as follows. Involved in resistance response to the pathogenic oomycetes Phytophthora infestans and Phytophthora capsici. The protein is L-type lectin-domain containing receptor kinase IX.2 of Arabidopsis thaliana (Mouse-ear cress).